We begin with the raw amino-acid sequence, 134 residues long: Profilin-1 (134 aa).

Cys-13 and Cys-118 are joined by a disulfide. Positions 84–100 match the Involved in PIP2 interaction motif; it reads AVIRGKKGSGGITIKKT. Phosphothreonine is present on Thr-114.

Belongs to the profilin family. In terms of assembly, occurs in many kinds of cells as a complex with monomeric actin in a 1:1 ratio. Post-translationally, phosphorylated by MAP kinases.

The protein localises to the cytoplasm. Its subcellular location is the cytoskeleton. Functionally, binds to actin and affects the structure of the cytoskeleton. At high concentrations, profilin prevents the polymerization of actin, whereas it enhances it at low concentrations. This chain is Profilin-1, found in Olea europaea (Common olive).